A 322-amino-acid polypeptide reads, in one-letter code: ATP-dependent 6-phosphofructokinase (322 aa).

Residues Gly12, 73–74 (RF), and 103–106 (GDGT) contribute to the ATP site. A Mg(2+)-binding site is contributed by Asp104. A substrate-binding site is contributed by 126-128 (TID). Catalysis depends on Asp128, which acts as the Proton acceptor. Arg155 is a binding site for ADP. Substrate is bound by residues Arg163 and 170–172 (MGR). Residues 186-188 (GSE), Lys212, and 214-216 (KPS) each bind ADP. Residues Glu223, Arg245, and 251–254 (HTQR) contribute to the substrate site.

Belongs to the phosphofructokinase type A (PFKA) family. ATP-dependent PFK group I subfamily. Prokaryotic clade 'B1' sub-subfamily. In terms of assembly, homotetramer. The cofactor is Mg(2+).

The protein localises to the cytoplasm. It carries out the reaction beta-D-fructose 6-phosphate + ATP = beta-D-fructose 1,6-bisphosphate + ADP + H(+). It functions in the pathway carbohydrate degradation; glycolysis; D-glyceraldehyde 3-phosphate and glycerone phosphate from D-glucose: step 3/4. Its activity is regulated as follows. Allosterically activated by ADP and other diphosphonucleosides, and allosterically inhibited by phosphoenolpyruvate. Its function is as follows. Catalyzes the phosphorylation of D-fructose 6-phosphate to fructose 1,6-bisphosphate by ATP, the first committing step of glycolysis. This chain is ATP-dependent 6-phosphofructokinase, found in Mesomycoplasma hyopneumoniae (strain 7448) (Mycoplasma hyopneumoniae).